The primary structure comprises 737 residues: Disintegrin and metalloproteinase domain-containing protein 2 (737 aa).

A signal peptide spans 1 to 18; that stretch reads MWLLLLLLSGLSRLGGLS. The propeptide occupies 19 to 180; it reads EPQTEGTREK…YKIRSIKPQR (162 aa). Topologically, residues 19–688 are extracellular; it reads EPQTEGTREK…ASAYRSKSAR (670 aa). 2 N-linked (GlcNAc...) asparagine glycosylation sites follow: Asn128 and Asn226. The 198-residue stretch at 184–381 folds into the Peptidase M12B domain; it reads HYLEIHIVVE…QSSHCLQNQP (198 aa). Disulfide bonds link Cys293–Cys376, Cys335–Cys360, Cys337–Cys342, and Cys450–Cys470. N-linked (GlcNAc...) asparagine glycans are attached at residues Asn359, Asn464, Asn491, and Asn571. Positions 389 to 478 constitute a Disintegrin domain; the sequence is MAVCGNGELE…VCEEDFFVQD (90 aa). The EGF-like domain maps to 617 to 650; it reads LNYDCTPEKCNHHGVCNNKKHCHCEPTYLPPDCK. 3 disulfides stabilise this stretch: Cys621–Cys632, Cys626–Cys638, and Cys640–Cys649. Residues 689–709 form a helical membrane-spanning segment; that stretch reads WPFFLIIPFYVVILVLIGMLV. The Cytoplasmic portion of the chain corresponds to 710-737; the sequence is KVYSQRKKWRMDDFSSEEQFESESESKD. The residue at position 731 (Ser731) is a Phosphoserine.

As to quaternary structure, heterodimer with ADAM1/fertilin subunit alpha. In terms of processing, the prodomain and the metalloprotease domain are cleaved during the epididymal maturation of the spermatozoa.

The protein localises to the membrane. Sperm surface membrane protein that may be involved in sperm-egg plasma membrane adhesion and fusion during fertilization. Could have a direct role in sperm-zona binding or migration of sperm from the uterus into the oviduct. Interactions with egg membrane could be mediated via binding between its disintegrin-like domain to one or more integrins receptors on the egg. This is a non catalytic metalloprotease-like protein. The polypeptide is Disintegrin and metalloproteinase domain-containing protein 2 (Adam2) (Rattus norvegicus (Rat)).